Consider the following 183-residue polypeptide: dTTP/UTP pyrophosphatase (183 aa).

The active-site Proton acceptor is Asp-64.

It belongs to the Maf family. YhdE subfamily. It depends on a divalent metal cation as a cofactor.

The protein localises to the cytoplasm. The enzyme catalyses dTTP + H2O = dTMP + diphosphate + H(+). The catalysed reaction is UTP + H2O = UMP + diphosphate + H(+). Functionally, nucleoside triphosphate pyrophosphatase that hydrolyzes dTTP and UTP. May have a dual role in cell division arrest and in preventing the incorporation of modified nucleotides into cellular nucleic acids. This chain is dTTP/UTP pyrophosphatase, found in Acinetobacter baylyi (strain ATCC 33305 / BD413 / ADP1).